Consider the following 86-residue polypeptide: Neurotoxin E1x (86 aa).

A signal peptide spans 1 to 19 (MNSLLMITACLVVIGTVWA). Positions 20-84 (KEGYLVDVKG…TWPLPNKTCG (65 aa)) constitute an LCN-type CS-alpha/beta domain. 4 cysteine pairs are disulfide-bonded: C30/C83, C34/C59, C43/C64, and C47/C66. C83 is subject to Cysteine amide.

Belongs to the long (4 C-C) scorpion toxin superfamily. Sodium channel inhibitor family. Beta subfamily. As to expression, expressed by the venom gland.

The protein resides in the secreted. Functionally, binds to sodium channels (Nav) and inhibits the inactivation of the activated channels, thereby blocking neuronal transmission. The polypeptide is Neurotoxin E1x (Centruroides sculpturatus (Arizona bark scorpion)).